A 90-amino-acid polypeptide reads, in one-letter code: Small ribosomal subunit protein bS16 (90 aa).

Belongs to the bacterial ribosomal protein bS16 family.

The chain is Small ribosomal subunit protein bS16 from Bacillus anthracis (strain A0248).